Here is a 348-residue protein sequence, read N- to C-terminus: Dihydroorotase (348 aa).

Zn(2+) is bound by residues H13 and H15. Residues 15–17 (HLR) and N41 contribute to the substrate site. K99, H136, and H174 together coordinate Zn(2+). At K99 the chain carries N6-carboxylysine. Substrate is bound at residue H136. L219 contacts substrate. D247 is a Zn(2+) binding site. The active site involves D247. Residues H251 and A263 each coordinate substrate.

It belongs to the metallo-dependent hydrolases superfamily. DHOase family. Class II DHOase subfamily. In terms of assembly, homodimer. Requires Zn(2+) as cofactor.

It catalyses the reaction (S)-dihydroorotate + H2O = N-carbamoyl-L-aspartate + H(+). It functions in the pathway pyrimidine metabolism; UMP biosynthesis via de novo pathway; (S)-dihydroorotate from bicarbonate: step 3/3. Its function is as follows. Catalyzes the reversible cyclization of carbamoyl aspartate to dihydroorotate. The chain is Dihydroorotase from Rhizobium etli (strain ATCC 51251 / DSM 11541 / JCM 21823 / NBRC 15573 / CFN 42).